A 119-amino-acid polypeptide reads, in one-letter code: Ribonuclease (119 aa).

Substrate is bound by residues Lys6 and Arg9. Catalysis depends on His11, which acts as the Proton acceptor. Intrachain disulfides connect Cys26–Cys81, Cys40–Cys92, and Cys58–Cys107. Substrate-binding positions include 41-45 (KFTNT) and Arg82. His114 acts as the Proton donor in catalysis.

Belongs to the pancreatic ribonuclease family. In terms of assembly, monomer. Interacts with and forms tight 1:1 complexes with RNH1. Dimerization of two such complexes may occur. Interaction with RNH1 inhibits this protein.

The protein localises to the secreted. The enzyme catalyses an [RNA] containing cytidine + H2O = an [RNA]-3'-cytidine-3'-phosphate + a 5'-hydroxy-ribonucleotide-3'-[RNA].. It carries out the reaction an [RNA] containing uridine + H2O = an [RNA]-3'-uridine-3'-phosphate + a 5'-hydroxy-ribonucleotide-3'-[RNA].. Its function is as follows. Endonuclease that catalyzes the cleavage of RNA on the 3' side of pyrimidine nucleotides. Acts on single-stranded and double-stranded RNA. The sequence is that of Ribonuclease from Chelonia mydas (Green sea-turtle).